Here is a 129-residue protein sequence, read N- to C-terminus: MINFRGRFGRPLWHYLVLPVVLLLLAVILLTPMIVQTESTLKIRPNQQGLSLPDGFYLYQHLNGRGIHIKSIIPENDSLVVSLEFPEQQMQAIEVLQDVLPAGYAIVASESKKRHRLLPVFRSNQQNLG.

At 1–14 (MINFRGRFGRPLWH) the chain is on the cytoplasmic side. The helical transmembrane segment at 15 to 35 (YLVLPVVLLLLAVILLTPMIV) threads the bilayer. Residues 36–129 (QTESTLKIRP…VFRSNQQNLG (94 aa)) are Periplasmic-facing.

This sequence belongs to the MzrA family. As to quaternary structure, interacts with EnvZ.

It localises to the cell inner membrane. In terms of biological role, modulates the activity of the EnvZ/OmpR two-component regulatory system, probably by directly modulating EnvZ enzymatic activity and increasing stability of phosphorylated OmpR. The protein is Modulator protein MzrA of Yersinia pestis (strain Pestoides F).